Reading from the N-terminus, the 1308-residue chain is Contactin-associated protein-like 4 (1308 aa).

The first 25 residues, 1-25, serve as a signal peptide directing secretion; the sequence is MGSVTGAVLKTLLLLSTQNWNRVEA. The Extracellular segment spans residues 26-1241; it reads GNSYDCDDPL…LANAIKSDSA (1216 aa). Positions 31-177 constitute an F5/8 type C domain; the sequence is CDDPLVSALP…IGMRIEVFGC (147 aa). Residues C31 and C177 are joined by a disulfide bond. 2 consecutive Laminin G-like domains span residues 212–364 and 398–547; these read FKTM…SFSC and FRTW…IDSC. 4 N-linked (GlcNAc...) asparagine glycosylation sites follow: N260, N285, N359, and N538. 4 disulfide bridges follow: C332-C364, C515-C547, C553-C564, and C558-C573. One can recognise an EGF-like 1 domain in the interval 549–586; that stretch reads ISDRCLPNYCEHGGECSQSWSTFHCNCTNTGYRGATCH. The N-linked (GlcNAc...) asparagine glycan is linked to N574. C575 and C585 form a disulfide bridge. The Fibrinogen C-terminal domain maps to 587–792; it reads NSIYEQSCEA…LLCQGDRSFW (206 aa). N602, N625, N637, N706, and N748 each carry an N-linked (GlcNAc...) asparagine glycan. Residues 793-957 form the Laminin G-like 3 domain; the sequence is NSASFDTEAS…AQVTPEVQPG (165 aa). 4 disulfide bridges follow: C931-C958, C962-C975, C969-C984, and C986-C996. Positions 958 to 997 constitute an EGF-like 2 domain; the sequence is CRGHCSSYGKLCRNGGKCRERPIGFFCDCTFSAYTGPFCS. Residues N1023 and N1073 are each glycosylated (N-linked (GlcNAc...) asparagine). A Laminin G-like 4 domain is found at 1046-1202; sequence FRTTRTPSLL…VTGHVTESSC (157 aa). C1167 and C1202 are disulfide-bonded. A helical transmembrane segment spans residues 1242–1262; that stretch reads VIGGLIAVVIFILLCITAIAV. Topologically, residues 1263-1308 are cytoplasmic; it reads RIYQQKRLYKRSEAKRSENVDSAEAVLKSELNIQNAVNENQKEYFF.

This sequence belongs to the neurexin family. As to quaternary structure, interacts with TIAM1.

It is found in the presynaptic cell membrane. Presynaptic protein involved in both dopaminergic synaptic transmission and GABAergic system, thereby participating in the structural maturation of inhibitory interneuron synapses. Involved in the dopaminergic synaptic transmission by attenuating dopamine release through a presynaptic mechanism. Also participates in the GABAergic system. The chain is Contactin-associated protein-like 4 (CNTNAP4) from Homo sapiens (Human).